The primary structure comprises 434 residues: GTPase Obg (434 aa).

The region spanning 1–158 (MFLDTAKIKV…RELQLELKIL (158 aa)) is the Obg domain. Residues 159-336 (ADVGLVGFPS…LLDATAELLD (178 aa)) enclose the OBG-type G domain. Residues 165 to 172 (GFPSVGKS), 190 to 194 (FTTIV), 212 to 215 (DLPG), 282 to 285 (NKMD), and 317 to 319 (SGL) contribute to the GTP site. Residues S172 and T192 each coordinate Mg(2+). An OCT domain is found at 356–434 (GFDEEEKAFE…IGKFEFEFVD (79 aa)).

Belongs to the TRAFAC class OBG-HflX-like GTPase superfamily. OBG GTPase family. In terms of assembly, monomer. Mg(2+) serves as cofactor.

Its subcellular location is the cytoplasm. Functionally, an essential GTPase which binds GTP, GDP and possibly (p)ppGpp with moderate affinity, with high nucleotide exchange rates and a fairly low GTP hydrolysis rate. Plays a role in control of the cell cycle, stress response, ribosome biogenesis and in those bacteria that undergo differentiation, in morphogenesis control. The protein is GTPase Obg of Streptococcus pneumoniae serotype 19F (strain G54).